A 253-amino-acid chain; its full sequence is Major prion protein (253 aa).

Positions 1 to 22 are cleaved as a signal peptide; that stretch reads MANLGCWMLVLFVATWSDLGLC. The interaction with GRB2, ERI3 and SYN1 stretch occupies residues 23–230; sequence KKRPKPGGWN…ESQAYYQRGS (208 aa). The tract at residues 26–108 is disordered; that stretch reads PKPGGWNTGG…WHKPSKPKTS (83 aa). Tandem repeats lie at residues 51–59, 60–67, 68–75, 76–83, and 84–91. The tract at residues 51–91 is 5 X 8 AA tandem repeats of P-H-G-G-G-W-G-Q; sequence PQGGGGWGQPHGGGWGQPHGGGWGQPHGGGWGQPHGGGWGQ. Gly residues predominate over residues 52 to 95; sequence QGGGGWGQPHGGGWGQPHGGGWGQPHGGGWGQPHGGGWGQGGGT. The Cu(2+) site is built by H61, G62, G63, H69, G70, G71, H77, G78, G79, H85, G86, and G87. Residues 98–108 show a composition bias toward basic residues; it reads QWHKPSKPKTS. Cysteines 179 and 214 form a disulfide. Residues N181 and N197 are each glycosylated (N-linked (GlcNAc...) asparagine). A lipid anchor (GPI-anchor amidated serine) is attached at S230. The propeptide at 231-253 is removed in mature form; that stretch reads SMVLFSSPPVILLISFLIFLIVG.

It belongs to the prion family. As to quaternary structure, monomer and homodimer. Has a tendency to aggregate into amyloid fibrils containing a cross-beta spine, formed by a steric zipper of superposed beta-strands. Soluble oligomers may represent an intermediate stage on the path to fibril formation. Copper binding may promote oligomerization. Interacts with GRB2, APP, ERI3/PRNPIP and SYN1. Mislocalized cytosolically exposed PrP interacts with MGRN1; this interaction alters MGRN1 subcellular location and causes lysosomal enlargement. Interacts with KIAA1191.

The protein resides in the cell membrane. Its subcellular location is the golgi apparatus. Its function is as follows. Its primary physiological function is unclear. Has cytoprotective activity against internal or environmental stresses. May play a role in neuronal development and synaptic plasticity. May be required for neuronal myelin sheath maintenance. May play a role in iron uptake and iron homeostasis. Soluble oligomers are toxic to cultured neuroblastoma cells and induce apoptosis (in vitro). Association with GPC1 (via its heparan sulfate chains) targets PRNP to lipid rafts. Also provides Cu(2+) or Zn(2+) for the ascorbate-mediated GPC1 deaminase degradation of its heparan sulfate side chains. The chain is Major prion protein (PRNP) from Macaca fascicularis (Crab-eating macaque).